Consider the following 839-residue polypeptide: MDCYTANWNPLGDSAFYRKYELYSMDWDLKEELRDCLVAAAPYGGPIALLRNPWRKEKPASARPVLEIYSASGVPLASLLWKSGPVVSLGWSAEEELLCVQEDGVVLVYGLHGDFRRHFSMGNEVLQNRVLDARIFHTEFGSGVAILTGAHRFTLSANVGDLKLRRMPEVPGLXSAPSCWTTVCQDRVAHILLAVGPDLYLLDHAACSAVTPPGLAPGVSSFLQMAVSFTYRHLALFTDTGYIWMGTASLKEKLCEFNCNIRAPPKQMVWCSRPRSKERAVVVAWERRLMVVGDAPESIQFVLDEDSYLVPELDGVRVFSRSTHEFLHEVPVASEEIFKIASMAPGALLLEAQKEYEKESQKADEYLREIQELGQLPQAVQQCIEAAGHEHWPDMQKSLLRAASFGKCFLDRFPPDSFVRMCQDLRVLNAIRDYHIGIPLTYSQYKQLTIQVLLDRLVLRRLYPLAIQICEYLRLPEVQGVSRILAHWACYKVQQKDVSDEDVARAINQKLGDTPGVSYSDIAARAYGCGRTELAIKLLEYEPRSGEQVPLLLKMKRSKLALSKAIESGDTDLVFTVLLHLKNELNRGDFFMTLRNQPMALSLYRQFCKHQELETLKDLYNQDDNHQELGSFHIRASYAAEERIEGRVAALQTAADAFYKAKNEFAAKATEDQMRLLRLQRRLEDELGGQFLDLSLHDTVTTLILSGQNKRAEQLARDFRIPDKRLWWLKLTALADLEDWEELEKFSKSKKSPIGYLPFVEICMKQHNKYEAKKYASRVGPEQKVKALLLVGDVAQAADVAIEHRNEAEMSLVLSHCTGATDGATADKIQRARAQAQKK.

3'-nitrotyrosine is present on tyrosine 4. Positions 642-736 (ERIEGRVAAL…WWLKLTALAD (95 aa)) are interaction with VPS33A.

It belongs to the VPS16 family. As to quaternary structure, core component of at least two putative endosomal tethering complexes, the homotypic fusion and vacuole protein sorting (HOPS) complex and the class C core vacuole/endosome tethering (CORVET) complex. Their common core is composed of the class C Vps proteins VPS11, VPS16, VPS18 and VPS33A, which in HOPS further associates with VPS39 and VPS41 and in CORVET with VPS8 and TGFBRAP1. Interacts with RAB5C. Interacts with STX17, MON1B. Associates with adapter protein complex 3 (AP-3) and clathrin:AP-3 complexes.

The protein localises to the late endosome membrane. The protein resides in the lysosome membrane. Its subcellular location is the early endosome. It localises to the cytoplasmic vesicle. It is found in the clathrin-coated vesicle. The protein localises to the autophagosome. In terms of biological role, plays a role in vesicle-mediated protein trafficking to lysosomal compartments including the endocytic membrane transport and autophagic pathways. Believed to act as a core component of the putative HOPS and CORVET endosomal tethering complexes which are proposed to be involved in the Rab5-to-Rab7 endosome conversion probably implicating MON1A/B, and via binding SNAREs and SNARE complexes to mediate tethering and docking events during SNARE-mediated membrane fusion. The HOPS complex is proposed to be recruited to Rab7 on the late endosomal membrane and to regulate late endocytic, phagocytic and autophagic traffic towards lysosomes. The CORVET complex is proposed to function as a Rab5 effector to mediate early endosome fusion probably in specific endosome subpopulations. Required for recruitment of VPS33A to the HOPS complex. Required for fusion of endosomes and autophagosomes with lysosomes; the function is dependent on its association with VPS33A but not VPS33B. The function in autophagosome-lysosome fusion implicates STX17 but not UVRAG. This is Vacuolar protein sorting-associated protein 16 homolog (VPS16) from Bos taurus (Bovine).